The sequence spans 290 residues: uncharacterized protein (290 aa).

A signal peptide spans 1–25 (MNKKSILSKTSLGSLFFLFGTALSA). Cys26 is lipidated: N-palmitoyl cysteine. Cys26 is lipidated: S-diacylglycerol cysteine. Positions 183 to 203 (GTDSKGSGSNNQNGGVTEKDF) are disordered. Residues 186–197 (SKGSGSNNQNGG) are compositionally biased toward low complexity.

It belongs to the MG439/MG440 family.

The protein localises to the cell membrane. This is an uncharacterized protein from Mycoplasma pneumoniae (strain ATCC 29342 / M129 / Subtype 1) (Mycoplasmoides pneumoniae).